The following is a 125-amino-acid chain: Holo-[acyl-carrier-protein] synthase (125 aa).

Mg(2+) contacts are provided by D8 and E57.

The protein belongs to the P-Pant transferase superfamily. AcpS family. Requires Mg(2+) as cofactor.

The protein resides in the cytoplasm. The catalysed reaction is apo-[ACP] + CoA = holo-[ACP] + adenosine 3',5'-bisphosphate + H(+). In terms of biological role, transfers the 4'-phosphopantetheine moiety from coenzyme A to a Ser of acyl-carrier-protein. In Azoarcus sp. (strain BH72), this protein is Holo-[acyl-carrier-protein] synthase.